The following is a 262-amino-acid chain: RNA-binding protein 7 (262 aa).

G2 bears the N-acetylglycine mark. Residues 10-87 (RTLFVGNLET…RPIKIQFRAG (78 aa)) form the RRM domain. 2 ZCCHC8 binding regions span residues 25–35 (LLFELFHQAGP) and 59–76 (HEVS…IKLF). A disordered region spans residues 95 to 121 (VSLSYPQHHVGNSSPTSTSPSRTVDNM). S133 and S134 each carry phosphoserine. Position 149 is an omega-N-methylarginine (R149). Disordered regions lie at residues 159–212 (SPHL…HYSR) and 242–262 (SHDY…SSRH). Positions 165–194 (SGFSPSAQSHNHTFNQSSSSQWRQDTPSSQ) are enriched in polar residues. S201 carries the post-translational modification Phosphoserine. The span at 242–253 (SHDYDNRRDSGR) shows a compositional bias: basic and acidic residues.

In terms of assembly, component of the nuclear exosome targeting (NEXT) complex composed of MTREX, ZCCHC8, and RBM7 that directs a subset of non-coding short-lived RNAs for exosomal degradation. Interacts with ZCCHC8 and SF3B2/SAP145. Binds to MTREX through ZCCHC8. Interacts with YWHAE and YWHAZ; these interactions are stress-dependent and RBM7 phosphorylation dependent; release RNA from the NEXT complex and may affect RNA targeting to the nuclear RNA exosomome for degradation. Interacts with MEPCE and LARP7, the core subunits of 7SK snRNP; upon genotoxic stress this interaction is enhanced, triggering the release of inactive P-TEFb complex from the core and P-TEFb complex activation. In terms of processing, phosphorylated at Ser-133 by MAPK14/p38-alpha-activated MAPKAPK2/MK2; this phosphorylation is stress-dependent; this phosphorylation decreases its RNA-binding capacity therefore affecting RNA nuclear exosome-mediated degradation. This phosphorylation mediates YWHAE and YWHAZ interactions.

Its subcellular location is the nucleus. The protein localises to the nucleoplasm. In terms of biological role, RNA-binding subunit of the trimeric nuclear exosome targeting (NEXT) complex, a complex that functions as an RNA exosome cofactor that directs a subset of non-coding short-lived RNAs for exosomal degradation. NEXT is involved in surveillance and turnover of aberrant transcripts and non-coding RNAs. Binds preferentially polyuridine sequences and associates with newly synthesized RNAs, including pre-mRNAs and short-lived exosome substrates such as promoter upstream transcripts (PROMPTs), enhancer RNAs (eRNAs), and 3'-extended products from small nuclear RNAs (snRNAs). Participates in several biological processes including DNA damage response (DDR) and stress response. During stress response, activation of the p38MAPK-MK2 pathway decreases RBM7-RNA-binding and subsequently the RNA exosome degradation activities, thereby modulating the turnover of non-coding transcriptome. Participates in DNA damage response (DDR), through its interaction with MEPCE and LARP7, the core subunits of 7SK snRNP complex, that release the positive transcription elongation factor b (P-TEFb) complex from the 7SK snRNP. In turn, activation of P-TEFb complex induces the transcription of P-TEFb-dependent DDR genes to promote cell viability. This chain is RNA-binding protein 7, found in Bos taurus (Bovine).